Here is a 238-residue protein sequence, read N- to C-terminus: Leucyl/phenylalanyl-tRNA--protein transferase (238 aa).

It belongs to the L/F-transferase family.

The protein resides in the cytoplasm. The enzyme catalyses N-terminal L-lysyl-[protein] + L-leucyl-tRNA(Leu) = N-terminal L-leucyl-L-lysyl-[protein] + tRNA(Leu) + H(+). The catalysed reaction is N-terminal L-arginyl-[protein] + L-leucyl-tRNA(Leu) = N-terminal L-leucyl-L-arginyl-[protein] + tRNA(Leu) + H(+). It carries out the reaction L-phenylalanyl-tRNA(Phe) + an N-terminal L-alpha-aminoacyl-[protein] = an N-terminal L-phenylalanyl-L-alpha-aminoacyl-[protein] + tRNA(Phe). Functionally, functions in the N-end rule pathway of protein degradation where it conjugates Leu, Phe and, less efficiently, Met from aminoacyl-tRNAs to the N-termini of proteins containing an N-terminal arginine or lysine. The polypeptide is Leucyl/phenylalanyl-tRNA--protein transferase (Pseudoalteromonas translucida (strain TAC 125)).